Here is a 1503-residue protein sequence, read N- to C-terminus: Lysophospholipase NTE1 (1503 aa).

The Cytoplasmic segment spans residues 1–25 (MDSSTAALATASAKLDAVAQQGSSS). A helical membrane pass occupies residues 26 to 46 (WIGFFANIILGIISLVYSILY). Residues 47-71 (SVLKLTTFSIPSLLYTLFSTSLTVT) are Lumenal-facing. Residues 72–92 (MNATTLMLIIVLVFSLVSWFV) traverse the membrane as a helical segment. Residues 93-1503 (RYRYLNMYSR…RTMAPRRASI (1411 aa)) lie on the Cytoplasmic side of the membrane. 3 disordered regions span residues 252–348 (RHGG…TTSV), 454–561 (TKGI…SNPF), and 722–745 (KNES…RFMD). 6 stretches are compositionally biased toward polar residues: residues 262-272 (TSATETYTSSR), 285-302 (STVS…SSHG), 487-496 (QRPSSVTASP), 506-542 (KHTS…STLL), 552-561 (PLSQRTSNPF), and 723-737 (NESS…QQGS). A nucleoside 3',5'-cyclic phosphate contacts are provided by residues 658-777 (GLPV…GYVG) and 821-941 (RLTN…IASR). Positions 1200–1364 (LVLGGGGARG…IDNLTVSHMK (165 aa)) constitute a PNPLA domain. The GXGXXG motif lies at 1204 to 1209 (GGGARG). The GXSXG motif lies at 1231–1235 (GTSIG). The Nucleophile role is filled by serine 1233. The active-site Proton acceptor is the aspartate 1351. The DGA/G motif lies at 1351–1353 (DGG).

The protein belongs to the NTE family.

The protein localises to the endoplasmic reticulum membrane. The enzyme catalyses a 1-acyl-sn-glycero-3-phosphocholine + H2O = sn-glycerol 3-phosphocholine + a fatty acid + H(+). Its activity is regulated as follows. Inhibited by organophosphorus esters. Its function is as follows. Intracellular phospholipase B that catalyzes the double deacylation of phosphatidylcholine (PC) to glycerophosphocholine (GroPCho). Plays an important role in membrane lipid homeostasis. Responsible for the rapid PC turnover in response to inositol, elevated temperatures, or when choline is present in the growth medium. In Pyricularia oryzae (strain 70-15 / ATCC MYA-4617 / FGSC 8958) (Rice blast fungus), this protein is Lysophospholipase NTE1 (NTE1).